Reading from the N-terminus, the 128-residue chain is Large ribosomal subunit protein bL12 (128 aa).

The protein belongs to the bacterial ribosomal protein bL12 family. In terms of assembly, homodimer. Part of the ribosomal stalk of the 50S ribosomal subunit. Forms a multimeric L10(L12)X complex, where L10 forms an elongated spine to which 2 to 4 L12 dimers bind in a sequential fashion. Binds GTP-bound translation factors.

Functionally, forms part of the ribosomal stalk which helps the ribosome interact with GTP-bound translation factors. Is thus essential for accurate translation. This chain is Large ribosomal subunit protein bL12, found in Halorhodospira halophila (strain DSM 244 / SL1) (Ectothiorhodospira halophila (strain DSM 244 / SL1)).